The chain runs to 168 residues: Small ribosomal subunit protein uS5c (168 aa).

One can recognise an S5 DRBM domain in the interval 17 to 80; sequence WQERVVQIRR…SDGKKKIVSV (64 aa).

This sequence belongs to the universal ribosomal protein uS5 family. As to quaternary structure, part of the 30S ribosomal subunit. Contacts protein S4.

Its subcellular location is the plastid. It localises to the chloroplast. Its function is as follows. With S4 and S12 plays an important role in translational accuracy. In Rhodomonas salina (Cryptomonas salina), this protein is Small ribosomal subunit protein uS5c (rps5).